Reading from the N-terminus, the 725-residue chain is Malate synthase G 2 (725 aa).

Acetyl-CoA contacts are provided by residues valine 118, 125-126, serine 276, and arginine 313; that span reads RY. The active-site Proton acceptor is arginine 340. Glyoxylate contacts are provided by residues arginine 340, glutamate 429, and 454 to 457; that span reads GFLD. 2 residues coordinate Mg(2+): glutamate 429 and aspartate 457. Residue proline 538 participates in acetyl-CoA binding. At cysteine 619 the chain carries Cysteine sulfenic acid (-SOH). Aspartate 633 serves as the catalytic Proton donor.

This sequence belongs to the malate synthase family. GlcB subfamily. In terms of assembly, monomer. The cofactor is Mg(2+).

The protein resides in the cytoplasm. It catalyses the reaction glyoxylate + acetyl-CoA + H2O = (S)-malate + CoA + H(+). It participates in carbohydrate metabolism; glyoxylate cycle; (S)-malate from isocitrate: step 2/2. In terms of biological role, involved in the glycolate utilization. Catalyzes the condensation and subsequent hydrolysis of acetyl-coenzyme A (acetyl-CoA) and glyoxylate to form malate and CoA. The chain is Malate synthase G 2 from Pseudomonas syringae pv. tomato (strain ATCC BAA-871 / DC3000).